The following is a 257-amino-acid chain: Fimbrial assembly protein, serogroup E1 (257 aa).

This Dichelobacter nodosus (Bacteroides nodosus) protein is Fimbrial assembly protein, serogroup E1 (fimB).